The chain runs to 589 residues: Probable translation initiation factor IF-2 (589 aa).

The tr-type G domain occupies L14–E229. Residues G23–T30 form a G1 region. Residue G23–T30 participates in GTP binding. Positions G48 to R52 are G2. The G3 stretch occupies residues D84–G87. GTP-binding positions include D84 to H88 and N138 to D141. The tract at residues N138–D141 is G4. A G5 region spans residues S206 to K208.

It belongs to the TRAFAC class translation factor GTPase superfamily. Classic translation factor GTPase family. IF-2 subfamily.

Its function is as follows. Function in general translation initiation by promoting the binding of the formylmethionine-tRNA to ribosomes. Seems to function along with eIF-2. The polypeptide is Probable translation initiation factor IF-2 (infB) (Thermoplasma acidophilum (strain ATCC 25905 / DSM 1728 / JCM 9062 / NBRC 15155 / AMRC-C165)).